A 41-amino-acid polypeptide reads, in one-letter code: MNRLIELTGWIVLVVSVILLGVASHIDNYQPPEQSASVQHK.

Residues 1–3 (MNR) lie on the Cytoplasmic side of the membrane. A helical transmembrane segment spans residues 4-24 (LIELTGWIVLVVSVILLGVAS). Residues 25–41 (HIDNYQPPEQSASVQHK) are Periplasmic-facing.

As to quaternary structure, interacts with FtsL and several other divisomal proteins, including FtsI, FtsK, FtsN, FtsQ, FtsW and YmgF. In terms of processing, the N-terminus is blocked.

Its subcellular location is the cell inner membrane. Component of the cell division machinery, which is probably involved in the stabilization of the divisome under certain stress conditions. The chain is Divisome-associated membrane protein Blr (blr) from Escherichia coli (strain K12).